An 80-amino-acid polypeptide reads, in one-letter code: Cell division protein ZapB (80 aa).

Positions 3–80 form a coiled coil; the sequence is FEVLEKLEAK…ALLGKMEDVE (78 aa).

Belongs to the ZapB family. As to quaternary structure, homodimer. The ends of the coiled-coil dimer bind to each other, forming polymers. Interacts with FtsZ.

It is found in the cytoplasm. Functionally, non-essential, abundant cell division factor that is required for proper Z-ring formation. It is recruited early to the divisome by direct interaction with FtsZ, stimulating Z-ring assembly and thereby promoting cell division earlier in the cell cycle. Its recruitment to the Z-ring requires functional FtsA or ZipA. The protein is Cell division protein ZapB of Vibrio vulnificus (strain CMCP6).